Reading from the N-terminus, the 392-residue chain is Acetyl-CoA acetyltransferase (392 aa).

The active-site Acyl-thioester intermediate is Cys85. Residues Cys206, Ser207, Val209, and Lys332 each coordinate CoA. Catalysis depends on His336, which acts as the Proton acceptor.

The protein belongs to the thiolase-like superfamily. Thiolase family. Interacts with HMG-CoA synthase (HMGCS) that catalyzes the second step in the pathway and with a DUF35 protein. The acetoacetyl-CoA thiolase/HMG-CoA synthase complex channels the intermediate via a fused CoA-binding site, which allows for efficient coupling of the endergonic thiolase reaction with the exergonic HMGCS reaction.

The enzyme catalyses 2 acetyl-CoA = acetoacetyl-CoA + CoA. It functions in the pathway metabolic intermediate biosynthesis; (R)-mevalonate biosynthesis; (R)-mevalonate from acetyl-CoA: step 1/3. Functionally, catalyzes the condensation of two acetyl-coA molecules into acetoacetyl-CoA. Functions in the mevalonate (MVA) pathway leading to isopentenyl diphosphate (IPP), a key precursor for the biosynthesis of isoprenoid compounds that are building blocks of archaeal membrane lipids. The sequence is that of Acetyl-CoA acetyltransferase from Methanocaldococcus jannaschii (strain ATCC 43067 / DSM 2661 / JAL-1 / JCM 10045 / NBRC 100440) (Methanococcus jannaschii).